Consider the following 250-residue polypeptide: MNILITNDDGIASSGIKALEAVLQKEHDTFLIAPLRERSATSMALSIYDSMRVERINDNHYIVDGYPADCVNIGLHGDIFPRIDLVLSGINRGVNMGHDIHYSGTVGAARHGAVHSRLSLAVSSGNITKDYDYIREAEFVRHFIDEYSSLLKVGVVYNMNIPFDFVSSMENLRITRLGKRTYEDTYSKKNIIGGIADFYLGGSKLEHATEEGTDFTAFFSGKISLTPLSLDQTDISLVQELSDTLSKSLS.

A divalent metal cation contacts are provided by aspartate 8, aspartate 9, serine 39, and asparagine 91.

The protein belongs to the SurE nucleotidase family. The cofactor is a divalent metal cation.

Its subcellular location is the cytoplasm. The catalysed reaction is a ribonucleoside 5'-phosphate + H2O = a ribonucleoside + phosphate. In terms of biological role, nucleotidase that shows phosphatase activity on nucleoside 5'-monophosphates. This Leptospira borgpetersenii serovar Hardjo-bovis (strain JB197) protein is 5'-nucleotidase SurE.